The following is a 177-amino-acid chain: Preprotein translocase subunit SECE1 (177 aa).

Residues 1–38 (MSLTAQFSPPVTGITRSLRDTKPSLSNLRVFPVYTEIR) constitute a chloroplast transit peptide. The interval 60–87 (RDTAGSESESEATPSPAEESGSGEDKEV) is disordered. Over residues 64 to 79 (GSESESEATPSPAEES) the composition is skewed to low complexity. A helical membrane pass occupies residues 140–160 (VVLGVIAGSSVVLLTVNFLLA).

It belongs to the SecE/SEC61-gamma family. Part of the Sec protein translocation apparatus. Interacts with SCY1 and ALB3.

The protein resides in the plastid. Its subcellular location is the chloroplast thylakoid membrane. Functionally, involved in the import/insertion pathway in the thylakoids. The signal recognition particle is not involved in the insertion of SECE1 in the thylakoid membrane. The protein is Preprotein translocase subunit SECE1 (SECE1) of Arabidopsis thaliana (Mouse-ear cress).